The chain runs to 192 residues: Erythropoietin (192 aa).

The signal sequence occupies residues methionine 1–glycine 25. Intrachain disulfides connect cysteine 32–cysteine 187 and cysteine 54–cysteine 58. Asparagine 49 carries N-linked (GlcNAc...) asparagine glycosylation. Asparagine 63 and asparagine 108 each carry an N-linked (GlcNAc...) asparagine glycan.

The protein belongs to the EPO/TPO family. As to expression, produced by kidney or liver of adult mammals and by liver of fetal or neonatal mammals.

The protein resides in the secreted. In terms of biological role, hormone involved in the regulation of erythrocyte proliferation and differentiation and the maintenance of a physiological level of circulating erythrocyte mass. Binds to EPOR leading to EPOR dimerization and JAK2 activation thereby activating specific downstream effectors, including STAT1 and STAT3. The sequence is that of Erythropoietin (EPO) from Bos taurus (Bovine).